We begin with the raw amino-acid sequence, 140 residues long: FAD synthase (140 aa).

ATP contacts are provided by residues 10-11, 15-18, and N93; these read TF and HPGH.

The protein belongs to the archaeal FAD synthase family. In terms of assembly, homodimer. The cofactor is a divalent metal cation.

The catalysed reaction is FMN + ATP + H(+) = FAD + diphosphate. It functions in the pathway cofactor biosynthesis; FAD biosynthesis; FAD from FMN: step 1/1. Its function is as follows. Catalyzes the transfer of the AMP portion of ATP to flavin mononucleotide (FMN) to produce flavin adenine dinucleotide (FAD) coenzyme. This chain is FAD synthase, found in Methanocella arvoryzae (strain DSM 22066 / NBRC 105507 / MRE50).